Consider the following 379-residue polypeptide: UDP-N-acetylglucosamine--N-acetylmuramyl-(pentapeptide) pyrophosphoryl-undecaprenol N-acetylglucosamine transferase (379 aa).

Residues 10–12 (TAG), Asn124, Arg161, Ser195, and Gln291 contribute to the UDP-N-acetyl-alpha-D-glucosamine site.

This sequence belongs to the glycosyltransferase 28 family. MurG subfamily.

It localises to the cell membrane. The enzyme catalyses di-trans,octa-cis-undecaprenyl diphospho-N-acetyl-alpha-D-muramoyl-L-alanyl-D-glutamyl-meso-2,6-diaminopimeloyl-D-alanyl-D-alanine + UDP-N-acetyl-alpha-D-glucosamine = di-trans,octa-cis-undecaprenyl diphospho-[N-acetyl-alpha-D-glucosaminyl-(1-&gt;4)]-N-acetyl-alpha-D-muramoyl-L-alanyl-D-glutamyl-meso-2,6-diaminopimeloyl-D-alanyl-D-alanine + UDP + H(+). The protein operates within cell wall biogenesis; peptidoglycan biosynthesis. Functionally, cell wall formation. Catalyzes the transfer of a GlcNAc subunit on undecaprenyl-pyrophosphoryl-MurNAc-pentapeptide (lipid intermediate I) to form undecaprenyl-pyrophosphoryl-MurNAc-(pentapeptide)GlcNAc (lipid intermediate II). The protein is UDP-N-acetylglucosamine--N-acetylmuramyl-(pentapeptide) pyrophosphoryl-undecaprenol N-acetylglucosamine transferase of Thermobifida fusca (strain YX).